The chain runs to 1587 residues: MAFWLPQNIQRRLILYVLQQITLFSNVDITKLDVSLGSHSKFTFQDVDLNISEMNISGCEVNSGMLGKLMLGLTVSGDVHISGDNIDFMITMINEDDFNDMNSFSLAKSFYDLTSSIMQFKPDAHLKNEISGSGSDSPRIPDDYTNPSSAGGNPTTNTYDIIVDDTASSTTESDDSSPIDSIPTSRFNIMQQKVIATALAKLKITLQSVRIRINLGKRKDCNCLDVVVKRIDMSTSEGHVRNFDANGISIAYINNEPSVVPPNNMDMAESLYFSQADASSIYMSALSDANTDIKSLDASVFNSERYELLSINGMSFSFVGISSIDDFAISRIKINLGTLQVNIPFLLKVREDIILTMIFKLISPRHTDKVDVKNSPAYKRFQNELHSNDTNLFSNLAIEEILIGLSSNQKIILRAVDLESNEINGINLSVGDIDLVGLDMDWISETRPCFNASFGKSNTIIELANTIIRVSEHDLILFLKIYYEIMDFIDFVLSKWKILGVKQVSQLRNDEKFSLNVGSLVIEIPLDNSILEINIPNIEHDSLNQDLKLYEVNMTHIVESIKISSLKLKEVSIDLSSARKKMKCYNEHFSQYFVFTHYKVQITGIDSQINLKSLWIIGAVIEQFYIASPVQEYPEATNKNSVRFHDNNKRLLSTSLMINKRAILAKYIIELDDIKVCISGFDADQIRHCKFSLQRLLFLNQIDKGLLFNIFQPHVEIKFFSGSLNDIIRSTNIGVSGQPHLILCIFADKKIKVSIKDIMIFYQAKWLDSVQRNASLDQEKGQNVEYSELPEFSISIRDSAINFLPFRINPSLVILFESIIVTKSGNDALINMHSKVGRFYLTDNYDHLKTTQVMNKTICDSLIKSGYSQIGKFEGLSMTLNKKHKIVNCNGCLEKVILSVCSDSFHTLVQLCMDLKVPVTFPDDKKYQPVPSVAVDLFETIEENEFNLSNLDNKDIDKSIGSDSDSLHIVNSFLDEVEDFQFHEDYNSGTVWSHTTSDTHSSSDILPISLKEEYLDSRRTEVQKHSQSNDRNIISEIDFDIKNADIRLYDGYDWRYTRKNVSSAISELEEGLLSGIQRQEQTESELSRTTVFDSICIATKQKDLGNLKQIISEQVQGKHDHLNSDKVYLYPSKHYKSLIKANELIFKIKIYDSNSPRNEEFNNHAAKLFQITASISTYEVLDNLPTSTWNKFVTLLKKEAWPKSEPMLYFDFMLFKPINSLEATEATINIRSAPLRIHADQYMVDFLLRFFQFNDKRFELIDEYPEILFLQKFKSNTIKLRIDYKPNKTSSGMYSGKISDLINLFVLDESKVTLKGVVLHGINGFNELSEQLVKIWGNDVTSKQIFNILQGFAPVKSFIALGAGAQTFITVLLAEYKRDRSISRSVKKSGNIFIKTTTGDFIKLGAKLAVGTQALLENTEGILSGNATQNRTLADVSQTNKVLDLDSLLQQDQVLIGRNPKIRNKSPSAIIIDAADLEESGRPKVVSLYSEQPLDLHKGLEEAYHALEKHIQIAYNTIWQTNQELRGEESRSAKAAAVTIAKAAPVAVIRPMIGATEAIAKTLQGIYNQLDKSNIEEINDKYKKEDN.

The tract at residues 128–160 (NEISGSGSDSPRIPDDYTNPSSAGGNPTTNTYD) is disordered. Residues 145-159 (TNPSSAGGNPTTNTY) show a composition bias toward polar residues.

Belongs to the ATG2 family.

It localises to the preautophagosomal structure membrane. The protein localises to the endoplasmic reticulum membrane. It catalyses the reaction a 1,2-diacyl-sn-glycero-3-phosphocholine(in) = a 1,2-diacyl-sn-glycero-3-phosphocholine(out). It carries out the reaction a 1,2-diacyl-sn-glycero-3-phospho-L-serine(in) = a 1,2-diacyl-sn-glycero-3-phospho-L-serine(out). The catalysed reaction is a 1,2-diacyl-sn-glycero-3-phosphoethanolamine(in) = a 1,2-diacyl-sn-glycero-3-phosphoethanolamine(out). Functionally, lipid transfer protein required for autophagosome completion and peroxisome degradation. Tethers the edge of the isolation membrane (IM) to the endoplasmic reticulum (ER) and mediates direct lipid transfer from ER to IM for IM expansion. ATG2 binds to the ER exit site (ERES), which is the membrane source for autophagosome formation, using basic residues in its N-terminal region (NR) and to the expanding edge of the IM through its C-terminal region. The latter binding is assisted by an ATG18-PtdIns3P interaction. ATG2 then extracts phospholipids from the membrane source using its NR and transfers them to ATG9 to the IM through its predicted beta-sheet-rich structure for membrane expansion. This chain is Autophagy-related protein 2 (ATG2), found in Candida glabrata (strain ATCC 2001 / BCRC 20586 / JCM 3761 / NBRC 0622 / NRRL Y-65 / CBS 138) (Yeast).